The chain runs to 476 residues: Aspartyl/glutamyl-tRNA(Asn/Gln) amidotransferase subunit B (476 aa).

Belongs to the GatB/GatE family. GatB subfamily. Heterotrimer of A, B and C subunits.

It catalyses the reaction L-glutamyl-tRNA(Gln) + L-glutamine + ATP + H2O = L-glutaminyl-tRNA(Gln) + L-glutamate + ADP + phosphate + H(+). The catalysed reaction is L-aspartyl-tRNA(Asn) + L-glutamine + ATP + H2O = L-asparaginyl-tRNA(Asn) + L-glutamate + ADP + phosphate + 2 H(+). Its function is as follows. Allows the formation of correctly charged Asn-tRNA(Asn) or Gln-tRNA(Gln) through the transamidation of misacylated Asp-tRNA(Asn) or Glu-tRNA(Gln) in organisms which lack either or both of asparaginyl-tRNA or glutaminyl-tRNA synthetases. The reaction takes place in the presence of glutamine and ATP through an activated phospho-Asp-tRNA(Asn) or phospho-Glu-tRNA(Gln). This is Aspartyl/glutamyl-tRNA(Asn/Gln) amidotransferase subunit B from Solidesulfovibrio magneticus (strain ATCC 700980 / DSM 13731 / RS-1) (Desulfovibrio magneticus).